The following is a 546-amino-acid chain: CTP synthase (546 aa).

The segment at 1–269 (MRSKKTKFIF…DERLAEVLNI (269 aa)) is amidoligase domain. Ser17 is a binding site for CTP. Ser17 is a binding site for UTP. ATP contacts are provided by residues 18–23 (SLGKGL) and Asp75. Positions 75 and 143 each coordinate Mg(2+). Residues 150-152 (DIE), 190-195 (KTKPTQ), and Lys226 contribute to the CTP site. UTP contacts are provided by residues 190–195 (KTKPTQ) and Lys226. Residues 295 to 537 (RIAIVGKYVN…IRAALAQRDA (243 aa)) form the Glutamine amidotransferase type-1 domain. Gly357 is an L-glutamine binding site. Residue Cys384 is the Nucleophile; for glutamine hydrolysis of the active site. Residues 385-388 (LGLQ), Glu408, and Arg465 contribute to the L-glutamine site. Active-site residues include His510 and Glu512.

This sequence belongs to the CTP synthase family. Homotetramer.

It catalyses the reaction UTP + L-glutamine + ATP + H2O = CTP + L-glutamate + ADP + phosphate + 2 H(+). The catalysed reaction is L-glutamine + H2O = L-glutamate + NH4(+). The enzyme catalyses UTP + NH4(+) + ATP = CTP + ADP + phosphate + 2 H(+). Its pathway is pyrimidine metabolism; CTP biosynthesis via de novo pathway; CTP from UDP: step 2/2. With respect to regulation, allosterically activated by GTP, when glutamine is the substrate; GTP has no effect on the reaction when ammonia is the substrate. The allosteric effector GTP functions by stabilizing the protein conformation that binds the tetrahedral intermediate(s) formed during glutamine hydrolysis. Inhibited by the product CTP, via allosteric rather than competitive inhibition. Catalyzes the ATP-dependent amination of UTP to CTP with either L-glutamine or ammonia as the source of nitrogen. Regulates intracellular CTP levels through interactions with the four ribonucleotide triphosphates. This chain is CTP synthase, found in Myxococcus xanthus (strain DK1622).